Here is a 186-residue protein sequence, read N- to C-terminus: Elongation factor P (186 aa).

This sequence belongs to the elongation factor P family.

The protein resides in the cytoplasm. The protein operates within protein biosynthesis; polypeptide chain elongation. Its function is as follows. Involved in peptide bond synthesis. Stimulates efficient translation and peptide-bond synthesis on native or reconstituted 70S ribosomes in vitro. Probably functions indirectly by altering the affinity of the ribosome for aminoacyl-tRNA, thus increasing their reactivity as acceptors for peptidyl transferase. In Brucella canis (strain ATCC 23365 / NCTC 10854 / RM-666), this protein is Elongation factor P.